A 200-amino-acid polypeptide reads, in one-letter code: ATP-dependent Clp protease proteolytic subunit 2 (200 aa).

The Nucleophile role is filled by serine 101. Histidine 126 is a catalytic residue.

This sequence belongs to the peptidase S14 family. Fourteen ClpP subunits assemble into 2 heptameric rings which stack back to back to give a disk-like structure with a central cavity, resembling the structure of eukaryotic proteasomes.

The protein resides in the cytoplasm. The catalysed reaction is Hydrolysis of proteins to small peptides in the presence of ATP and magnesium. alpha-casein is the usual test substrate. In the absence of ATP, only oligopeptides shorter than five residues are hydrolyzed (such as succinyl-Leu-Tyr-|-NHMec, and Leu-Tyr-Leu-|-Tyr-Trp, in which cleavage of the -Tyr-|-Leu- and -Tyr-|-Trp bonds also occurs).. Its function is as follows. Cleaves peptides in various proteins in a process that requires ATP hydrolysis. Has a chymotrypsin-like activity. Plays a major role in the degradation of misfolded proteins. The sequence is that of ATP-dependent Clp protease proteolytic subunit 2 from Prochlorococcus marinus (strain MIT 9313).